The following is a 294-amino-acid chain: Aquaporin NIP1-2 (294 aa).

Met1 carries the post-translational modification N-acetylmethionine. The next 2 membrane-spanning stretches (helical) occupy residues 54–74 (LMAE…AVAV) and 82–102 (VTLP…VYSL). The NPA 1 motif lies at 111-113 (NPA). Transmembrane regions (helical) follow at residues 133 to 153 (VISQ…LFGL), 177 to 197 (SFVI…GVAT), and 201 to 221 (AIGE…VIIA). An NPA 2 motif is present at residues 230-232 (NPG). Residues 248–268 (WIYIVSPIVGAVSGAWVYNMV) form a helical membrane-spanning segment. Phosphoserine is present on Ser283.

Belongs to the MIP/aquaporin (TC 1.A.8) family. NIP (TC 1.A.8.12) subfamily. As to expression, expressed in developing seeds.

It localises to the membrane. Water channel probably required to promote glycerol permeability and water transport across cell membranes. The protein is Aquaporin NIP1-2 (NIP1-2) of Arabidopsis thaliana (Mouse-ear cress).